The chain runs to 335 residues: Putative serine/threonine-protein kinase 040L (335 aa).

Residues 33 to 329 (YYYQEFHDEG…DRLTELHHHL (297 aa)) enclose the Protein kinase domain. Residues 39 to 47 (HDEGGYGSI) and K62 each bind ATP. D196 (proton acceptor) is an active-site residue.

Belongs to the protein kinase superfamily. Ser/Thr protein kinase family.

The chain is Putative serine/threonine-protein kinase 040L from Invertebrate iridescent virus 3 (IIV-3).